The sequence spans 389 residues: Large envelope protein (389 aa).

An N-acetylmethionine modification is found at methionine 1. The N-myristoyl glycine; by host moiety is linked to residue glycine 2. The pre-S1 stretch occupies residues 2–108; it reads GTNLSVPNPL…PPLRDSHPQA (107 aa). The interval 2–163 is pre-S; sequence GTNLSVPNPL…SARTGDPVTI (162 aa). At 2-170 the chain is on the virion surface; in external conformation side; sequence GTNLSVPNPL…VTIMENITSG (169 aa). Residues 2 to 242 are Intravirion; in internal conformation-facing; sequence GTNLSVPNPL…PGYRWMCLRR (241 aa). Residues 77 to 95 show a composition bias toward polar residues; the sequence is VSTIPPPASTNRQSGRQPT. Residues 77-103 form a disordered region; the sequence is VSTIPPPASTNRQSGRQPTPISPPLRD. Residues 109–163 form a pre-S2 region; the sequence is MQWNSTALHQALQDPRVRGLYLPAGGSSSGTVNPAPNIASHISSISARTGDPVTI. A helical transmembrane segment spans residues 171–191; that stretch reads FLGPLLVLQAGFFLLTRILTI. Residues 192-242 are Intravirion; in external conformation-facing; the sequence is PQSLDSWWTSLNFLGGSPVCLGQNSQSPTSNHSPTSCPPICPGYRWMCLRR. A helical transmembrane segment spans residues 243–263; the sequence is FIIFLFILLLCLIFLLVLLDY. Residues 264 to 337 are Virion surface-facing; sequence QGMLPVCPLI…WASVRFSWLS (74 aa). An N-linked (GlcNAc...) asparagine; by host glycan is attached at asparagine 309. Residues 338-358 traverse the membrane as a helical segment; it reads LLVPFVQWFVGLSPTVWLSAI. Over 359-364 the chain is Intravirion; the sequence is WMMWYW. A helical membrane pass occupies residues 365 to 387; it reads GPSLYSIVSPFIPLLPIFFCLWV. The Virion surface segment spans residues 388 to 389; it reads YI.

The protein belongs to the orthohepadnavirus major surface antigen family. As to quaternary structure, in its internal form (Li-HBsAg), interacts with the capsid protein and with the isoform S. Interacts with host chaperone CANX. Associates with host chaperone CANX through its pre-S2 N glycan; this association may be essential for isoform M proper secretion. In terms of assembly, interacts with isoform L. Interacts with the antigens of satellite virus HDV (HDVAgs); this interaction is required for encapsidation of HDV genomic RNA. Isoform M is N-terminally acetylated by host at a ratio of 90%, and N-glycosylated by host at the pre-S2 region. Post-translationally, myristoylated.

The protein localises to the virion membrane. In terms of biological role, the large envelope protein exists in two topological conformations, one which is termed 'external' or Le-HBsAg and the other 'internal' or Li-HBsAg. In its external conformation the protein attaches the virus to cell receptors and thereby initiating infection. This interaction determines the species specificity and liver tropism. This attachment induces virion internalization predominantly through caveolin-mediated endocytosis. The large envelope protein also assures fusion between virion membrane and endosomal membrane. In its internal conformation the protein plays a role in virion morphogenesis and mediates the contact with the nucleocapsid like a matrix protein. Its function is as follows. The middle envelope protein plays an important role in the budding of the virion. It is involved in the induction of budding in a nucleocapsid independent way. In this process the majority of envelope proteins bud to form subviral lipoprotein particles of 22 nm of diameter that do not contain a nucleocapsid. This Hepatitis B virus genotype A2 subtype adw (isolate Japan/Nishioka/1983) (HBV-A) protein is Large envelope protein.